The sequence spans 264 residues: Thymidylate synthase (264 aa).

R21 provides a ligand contact to dUMP. Residue H51 coordinates (6R)-5,10-methylene-5,6,7,8-tetrahydrofolate. DUMP is bound at residue 126–127 (RR). The active-site Nucleophile is the C146. DUMP is bound by residues 166-169 (RSAD), N177, and 207-209 (HLY). Residue D169 coordinates (6R)-5,10-methylene-5,6,7,8-tetrahydrofolate. A263 serves as a coordination point for (6R)-5,10-methylene-5,6,7,8-tetrahydrofolate.

This sequence belongs to the thymidylate synthase family. Bacterial-type ThyA subfamily. As to quaternary structure, homodimer.

It is found in the cytoplasm. The enzyme catalyses dUMP + (6R)-5,10-methylene-5,6,7,8-tetrahydrofolate = 7,8-dihydrofolate + dTMP. It participates in pyrimidine metabolism; dTTP biosynthesis. In terms of biological role, catalyzes the reductive methylation of 2'-deoxyuridine-5'-monophosphate (dUMP) to 2'-deoxythymidine-5'-monophosphate (dTMP) while utilizing 5,10-methylenetetrahydrofolate (mTHF) as the methyl donor and reductant in the reaction, yielding dihydrofolate (DHF) as a by-product. This enzymatic reaction provides an intracellular de novo source of dTMP, an essential precursor for DNA biosynthesis. This Stutzerimonas stutzeri (strain A1501) (Pseudomonas stutzeri) protein is Thymidylate synthase.